The chain runs to 108 residues: Urease subunit beta (108 aa).

It belongs to the urease beta subunit family. Heterotrimer of UreA (gamma), UreB (beta) and UreC (alpha) subunits. Three heterotrimers associate to form the active enzyme.

It localises to the cytoplasm. It catalyses the reaction urea + 2 H2O + H(+) = hydrogencarbonate + 2 NH4(+). It participates in nitrogen metabolism; urea degradation; CO(2) and NH(3) from urea (urease route): step 1/1. This Chromohalobacter salexigens (strain ATCC BAA-138 / DSM 3043 / CIP 106854 / NCIMB 13768 / 1H11) protein is Urease subunit beta.